Reading from the N-terminus, the 1035-residue chain is Cell-division control histidine kinase PdhS (1035 aa).

The important for polar localization stretch occupies residues 1 to 613; sequence MSGSYPFIDI…HADGSEEPVD (613 aa). Residues 500 to 533 form a disordered region; that stretch reads QGLANTRAESETPVSETSSIEPVEPTPPVKTRSE. Positions 614-1035 are interaction with DivK; sequence AHLNAIAWRG…VFPPTRVLAD (422 aa). The PAS domain occupies 659–730; sequence HVEELKTILD…YLHGLSGNGV (72 aa). The 230-residue stretch at 802-1031 folds into the Histidine kinase domain; sequence RISHEIRTPL…VVEIVFPPTR (230 aa). At His805 the chain carries Phosphohistidine; by autocatalysis.

In terms of assembly, interacts with DivK.

It is found in the cytoplasm. The catalysed reaction is ATP + protein L-histidine = ADP + protein N-phospho-L-histidine.. In terms of biological role, functions as a polar differentiation marker. Essential protein that, by localizing in the old pole of dividing cells, controls cell division and maturation, probably through control of DivK phosphorylation status and cellular distribution, which in turn regulates CtrA, a transcriptional regulator of the minB operon. The asymmetrical localization of this protein is probably required for cells to enter a new division cycle. This Brucella ovis (strain ATCC 25840 / 63/290 / NCTC 10512) protein is Cell-division control histidine kinase PdhS (pdhS).